Consider the following 467-residue polypeptide: Proton extrusion protein PxcA (467 aa).

Residues 183-205 (TSPPQLIRPRTEQNKKPRGKADT) are disordered. The span at 191-203 (PRTEQNKKPRGKA) shows a compositional bias: basic and acidic residues. 4 helical membrane-spanning segments follow: residues 249–269 (FILL…ALIV), 352–372 (IFSV…IMVL), 391–411 (IIIL…WEVI), and 427–447 (FIFL…KYWI).

It belongs to the CemA family.

It localises to the cell inner membrane. Required for H(+) efflux immediately after light irradiation to form a rapid H(+) concentration gradient across the thylakoid membranes. Together with PxcL, contributes to transient H(+) uptake following dark to light transition. The protein is Proton extrusion protein PxcA of Trichormus variabilis (strain ATCC 29413 / PCC 7937) (Anabaena variabilis).